A 387-amino-acid chain; its full sequence is Protein BTN1 (387 aa).

A signal peptide spans 1–31; the sequence is MELDRDKKTFAYFWLFGLINNILYVVILSAA. The next 10 membrane-spanning stretches (helical) occupy residues 43 to 63, 72 to 92, 93 to 113, 129 to 149, 151 to 171, 225 to 245, 257 to 276, 278 to 298, 308 to 328, and 347 to 367; these read IVLLFDIMPSFLIKLSAPFFV, IPILILLSMLGIILVSTRSLW, LCLPGIVLASLSSGFGEITFL, SGTGGAGIVGSFSYLLLTTVF, LNIQLSLLLYAALPLIFLLYY, TVYLFEYLINQGVAPTLLFPI, YVTYGTLYQLGVFISRTWGH, LPVKNLYLFSVLQLINLLITL, SISWIMVLIFYEGLIGGSSYV, and LGSVSISDSLGTLIAAFLGII.

Belongs to the battenin family.

Its subcellular location is the vacuole membrane. Functionally, involved in vacuolar transport and vacuole pH homeostasis. Also required for cytokinesis. In Kluyveromyces lactis (strain ATCC 8585 / CBS 2359 / DSM 70799 / NBRC 1267 / NRRL Y-1140 / WM37) (Yeast), this protein is Protein BTN1 (BTN1).